A 224-amino-acid polypeptide reads, in one-letter code: RNA-binding protein 24-B (224 aa).

The region spanning 11–88 is the RRM domain; the sequence is TKIFVGGLPY…RKANVNLAYL (78 aa).

Its subcellular location is the nucleus. The protein resides in the cytoplasm. Functionally, multifunctional RNA-binding protein involved in the regulation of pre-mRNA splicing, mRNA stability and mRNA translation important for cell fate decision and differentiation. Plays a major role in pre-mRNA alternative splicing regulation. Mediates preferentially muscle-specific exon inclusion in numerous mRNAs important for striated cardiac and skeletal muscle cell differentiation. Binds to intronic splicing enhancer (ISE) composed of stretches of GU-rich motifs localized in flanking intron of exon that will be included by alternative splicing. Involved in embryonic stem cell (ESC) transition to cardiac cell differentiation by promoting pre-mRNA alternative splicing events of several pluripotency and/or differentiation genes. Plays a role in the regulation of mRNA stability and mRNA translation to which it is bound. Involved in myogenic differentiation by regulating myog levels. Binds to a huge amount of mRNAs. Required for embryonic heart development, sarcomer and M-band formation in striated muscles. The sequence is that of RNA-binding protein 24-B (rbm24-b) from Xenopus laevis (African clawed frog).